The primary structure comprises 428 residues: Pyruvate kinase (428 aa).

Substrate is bound at residue Arg-34. K(+) is bound by residues Asn-36, Ser-38, Asp-68, and Thr-69. An ATP-binding site is contributed by 36–39 (NFSH). Residues Arg-75 and Lys-152 each coordinate ATP. Glu-214 is a binding site for Mg(2+). Positions 237, 238, and 270 each coordinate substrate. Position 238 (Asp-238) interacts with Mg(2+).

This sequence belongs to the pyruvate kinase family. In terms of assembly, homotetramer. It depends on Mg(2+) as a cofactor. K(+) is required as a cofactor.

The enzyme catalyses pyruvate + ATP = phosphoenolpyruvate + ADP + H(+). It participates in carbohydrate degradation; glycolysis; pyruvate from D-glyceraldehyde 3-phosphate: step 5/5. This chain is Pyruvate kinase (PYK1), found in Encephalitozoon cuniculi (strain GB-M1) (Microsporidian parasite).